The chain runs to 353 residues: Photosystem II D2 protein (353 aa).

At T2 the chain carries N-acetylthreonine. Phosphothreonine is present on T2. Residues 41 to 61 (CAYFALGGWFTGTTFVTSWYT) form a helical membrane-spanning segment. H118 lines the chlorophyll a pocket. A helical membrane pass occupies residues 125 to 141 (GFMLRQFELARSVQLRP). The pheophytin a site is built by Q130 and N143. A helical transmembrane segment spans residues 153–166 (VFVSVFLIYPLGQS). Position 198 (H198) interacts with chlorophyll a. The helical transmembrane segment at 208-228 (AALLCAIHGATVENTLFEDGD) threads the bilayer. The a plastoquinone site is built by H215 and F262. H215 serves as a coordination point for Fe cation. H269 serves as a coordination point for Fe cation. The helical transmembrane segment at 279-295 (GLWMSALGVVGLALNLR) threads the bilayer.

It belongs to the reaction center PufL/M/PsbA/D family. As to quaternary structure, PSII is composed of 1 copy each of membrane proteins PsbA, PsbB, PsbC, PsbD, PsbE, PsbF, PsbH, PsbI, PsbJ, PsbK, PsbL, PsbM, PsbT, PsbX, PsbY, PsbZ, Psb30/Ycf12, at least 3 peripheral proteins of the oxygen-evolving complex and a large number of cofactors. It forms dimeric complexes. The D1/D2 heterodimer binds P680, chlorophylls that are the primary electron donor of PSII, and subsequent electron acceptors. It shares a non-heme iron and each subunit binds pheophytin, quinone, additional chlorophylls, carotenoids and lipids. There is also a Cl(-1) ion associated with D1 and D2, which is required for oxygen evolution. The PSII complex binds additional chlorophylls, carotenoids and specific lipids. is required as a cofactor.

It localises to the plastid. The protein localises to the chloroplast thylakoid membrane. It catalyses the reaction 2 a plastoquinone + 4 hnu + 2 H2O = 2 a plastoquinol + O2. Its function is as follows. Photosystem II (PSII) is a light-driven water:plastoquinone oxidoreductase that uses light energy to abstract electrons from H(2)O, generating O(2) and a proton gradient subsequently used for ATP formation. It consists of a core antenna complex that captures photons, and an electron transfer chain that converts photonic excitation into a charge separation. The D1/D2 (PsbA/PsbD) reaction center heterodimer binds P680, the primary electron donor of PSII as well as several subsequent electron acceptors. D2 is needed for assembly of a stable PSII complex. The protein is Photosystem II D2 protein of Pelargonium hortorum (Common geranium).